Reading from the N-terminus, the 557-residue chain is MAAQGFLLIATFLLVLMVLARPLGSGLARLINDIPLPGTAGVERILFRLPGVSDHEMNWKQYLCAILGLNMLGLAVLFFMLLGQHYLPLNPQQLPGLSWDLALNTAVSFVTNTNWQSYSGETTLSYFSQMAGLTVQNFLSAASGIAVIFAFIRAFTRQSMSTLGNAWVDLLRITLWVLVPVALLIALFFIQQGALQNFLPYQAVNTVEGAQQLLPMGPVASQEAIKMLGTNGGGFFNANSSHPFENPTALTNFVQMLAIFLIPTALCFAFGEVTGDRRQGRMLLWAMSVIFVICVGVVMWAEVQGNPHLLALGADSSINMEGKESRFGVLVSSLFAVVTTAASCGAVIAMHDSFTALGGMVPMWLMQIGEVVFGGVGSGLYGMMLFVLLAVFIAGLMIGRTPEYLGKKIDVREMKLTALAILVTPTLVLMGAALAMMTDAGRSAMLNPGPHGFSEVLYAVSSAANNNGSAFAGLSANSPFWNCLLAFCMFVGRFGVIIPVMAIAGSLVSKKSQPASSGTLPTHGPLFVGLLIGTVLLVGALTFIPALALGPVAEYLS.

Helical transmembrane passes span 5–25 (GFLLIATFLLVLMVLARPLGS), 63–83 (LCAILGLNMLGLAVLFFMLLG), 132–152 (GLTVQNFLSAASGIAVIFAFI), 170–190 (LLRITLWVLVPVALLIALFFI), 253–273 (FVQMLAIFLIPTALCFAFGEV), 283–303 (LLWAMSVIFVICVGVVMWAEV), 329–349 (VLVSSLFAVVTTAASCGAVIA), 356–376 (ALGGMVPMWLMQIGEVVFGGV), 379–399 (GLYGMMLFVLLAVFIAGLMIG), 416–436 (LTALAILVTPTLVLMGAALAM), 484–504 (LLAFCMFVGRFGVIIPVMAIA), and 526–546 (LFVGLLIGTVLLVGALTFIPA).

The protein belongs to the KdpA family. The system is composed of three essential subunits: KdpA, KdpB and KdpC.

It is found in the cell inner membrane. In terms of biological role, part of the high-affinity ATP-driven potassium transport (or Kdp) system, which catalyzes the hydrolysis of ATP coupled with the electrogenic transport of potassium into the cytoplasm. This subunit binds the periplasmic potassium ions and delivers the ions to the membrane domain of KdpB through an intramembrane tunnel. In Shigella boydii serotype 4 (strain Sb227), this protein is Potassium-transporting ATPase potassium-binding subunit.